The following is a 252-amino-acid chain: NDR1/HIN1-like protein 6 (252 aa).

Positions 1-46 are disordered; sequence MSQHQKIYPVQDPEAATARPTAPLVPRGSSRSEHGDPSKVPLNQRP. Residues 70–90 form a helical membrane-spanning segment; it reads FCFLLLLVVAVGASIGILYLV. N-linked (GlcNAc...) asparagine glycans are attached at residues asparagine 121, asparagine 154, asparagine 166, and asparagine 180.

As to quaternary structure, homodimer. As to expression, highly expressed in seeds and at lower level in roots and senescing leaves. Expressed in leaves and flowers.

It localises to the cell membrane. Its subcellular location is the cytoplasm. The protein localises to the cytosol. Functionally, plays an important role in the abiotic stresses-induced abscisic acid (ABA) signaling and biosynthesis. Acts as a positive regulator of ABA-mediated seed germination inhibition. Functions downstream of ABF2/AREB1, ABF4/AREB2 and ABF3. The sequence is that of NDR1/HIN1-like protein 6 from Arabidopsis thaliana (Mouse-ear cress).